Reading from the N-terminus, the 380-residue chain is MDAFKQQLEQLSAKNQYRSIPDLVHQGRYITRENRKMLNMSSNDYLGLASNENLRQSFLQQYGGNFPSFTSSSSRLLTGNFPIYTDLEELVAQRFQRESALLFNSGYHANIGILPALTTTKSLILADKLVHASMIDGIRLSQCEFFRYRHNDYEHLKNLLEKNVGKFDRTFIVTESVFSMDGDVADLKQLVQLKKQFPNTYLYVDEAHAVGVYGQNGLGIAERANVIADIDLLVGTFGKALASMGAYVVCDQILKECLINQMRPLIFSTALPPFNVAWTHFIFERLPQLSKERTHLEQLSAFLRQEVEHRTQIMPSQTCIVPYILGENEATLAKAKDLQEQGYYCLPIRPPTVPKNTSRIRLSLTADMTADEVRQFAVHL.

Residue Arg18 participates in substrate binding. A pyridoxal 5'-phosphate-binding site is contributed by 106-107; sequence GY. His131 serves as a coordination point for substrate. Residues Ser179, 205 to 208, and 236 to 239 each bind pyridoxal 5'-phosphate; these read DEAH and TFGK. Lys239 carries the N6-(pyridoxal phosphate)lysine modification. Residue Thr352 coordinates substrate.

This sequence belongs to the class-II pyridoxal-phosphate-dependent aminotransferase family. BioF subfamily. Homodimer. Pyridoxal 5'-phosphate is required as a cofactor.

It catalyses the reaction 6-carboxyhexanoyl-[ACP] + L-alanine + H(+) = (8S)-8-amino-7-oxononanoate + holo-[ACP] + CO2. It functions in the pathway cofactor biosynthesis; biotin biosynthesis. Functionally, catalyzes the decarboxylative condensation of pimeloyl-[acyl-carrier protein] and L-alanine to produce 8-amino-7-oxononanoate (AON), [acyl-carrier protein], and carbon dioxide. This chain is Putative 8-amino-7-oxononanoate synthase (bioF), found in Haemophilus influenzae (strain ATCC 51907 / DSM 11121 / KW20 / Rd).